Reading from the N-terminus, the 377-residue chain is Protein-tyrosine sulfotransferase 2 (377 aa).

The Cytoplasmic segment spans residues 1-8; the sequence is MRLSVRRV. Residues 9–25 traverse the membrane as a helical; Signal-anchor for type II membrane protein segment; the sequence is LLAAGCALVLVLAVQLG. Residues 26-377 are Lumenal-facing; the sequence is QQVLECRAVL…NSTSSHLGSS (352 aa). Residue 78 to 82 coordinates 3'-phosphoadenylyl sulfate; it reads RSGTT. Cysteines 96 and 156 form a disulfide. E99 (proton donor/acceptor) is an active-site residue. Positions 101–105 are interaction with peptide substrate; sequence RIIPR. 3'-phosphoadenylyl sulfate contacts are provided by R183, S191, and R195. Residues C225 and C233 are joined by a disulfide bond. 3'-phosphoadenylyl sulfate is bound by residues Y238, 285-294, and K300; that span reads STDQVIKPVN. N-linked (GlcNAc...) asparagine glycosylation is found at N343 and N368.

It belongs to the protein sulfotransferase family. Homodimer. Can also form heterodimers with TPST1. Post-translationally, N-glycosylated. Widely expressed.

It localises to the golgi apparatus membrane. The catalysed reaction is L-tyrosyl-[protein] + 3'-phosphoadenylyl sulfate = O-sulfo-L-tyrosine-[protein] + adenosine 3',5'-bisphosphate + H(+). Catalyzes the O-sulfation of tyrosine residues within acidic motifs of polypeptides, using 3'-phosphoadenylyl sulfate (PAPS) as cosubstrate. The polypeptide is Protein-tyrosine sulfotransferase 2 (TPST2) (Homo sapiens (Human)).